An 848-amino-acid polypeptide reads, in one-letter code: DIS3-like exonuclease 2 (848 aa).

The interval 153-173 (KGDRNSGKTDNNSPNKTEKRC) is disordered. Mg(2+)-binding residues include aspartate 345 and aspartate 354.

It belongs to the RNR ribonuclease family. DIS3L2 subfamily. Requires Mg(2+) as cofactor. Mn(2+) is required as a cofactor. Post-translationally, cleaved by caspase ced-3 in vitro.

The protein resides in the cytoplasm. Its subcellular location is the P-body. Functionally, 3'-5'-exoribonuclease that specifically recognizes RNAs polyuridylated at their 3' end and mediates their degradation. Component of an exosome-independent RNA degradation pathway that mediates degradation of cytoplasmic mRNAs that have been deadenylated and subsequently uridylated at their 3'. This chain is DIS3-like exonuclease 2, found in Caenorhabditis elegans.